The sequence spans 147 residues: Hemoglobin subunit epsilon-1 (147 aa).

The region spanning 3–147 is the Globin domain; it reads HFTAEEKAAI…VATALAHKYH (145 aa). Histidine 64 and histidine 93 together coordinate heme b.

This sequence belongs to the globin family. Heterotetramer of two epsilon chains and two alpha chains. As to expression, red blood cells.

Beta-type chain found in early embryos. The polypeptide is Hemoglobin subunit epsilon-1 (HBE1) (Capra hircus (Goat)).